The primary structure comprises 593 residues: Numb-related protein 1 (593 aa).

Disordered stretches follow at residues 1–97 (MSAS…WQPD), 235–278 (TAQV…NSRS), 331–375 (LRQG…FGTQ), and 493–581 (MSMS…DPFD). Phosphoserine; by PKC is present on S17. The segment covering 27-37 (QNSLVSEQQPS) has biased composition (polar residues). The span at 64 to 74 (RSLRLPKKRRD) shows a compositional bias: basic residues. S65 carries the post-translational modification Phosphoserine; by PKC. A PID domain is found at 102–255 (RTGTCCFNVK…STSSTPPKDI (154 aa)). Composition is skewed to polar residues over residues 236 to 251 (AQVN…SSTP), 261 to 278 (EDNT…NSRS), and 354 to 364 (SLRTVSNNPTE). Residues 493 to 511 (MSMSPTSPSSDPPSTSSYS) are compositionally biased toward low complexity. The segment covering 516–528 (SGPPPAHAPPPLP) has biased composition (pro residues). A compositionally biased stretch (polar residues) spans 532 to 565 (AVSNGSPSIYQQQLQQANSTRNSPAGINWNSSPN).

As to quaternary structure, interacts with pkc-3. As to expression, expressed in cells comprising the intestine, pharyngeal cells, the anal sphincter and depressor muscles.

Its subcellular location is the cytoplasm. It is found in the cell cortex. The protein localises to the cytoskeleton. The protein resides in the membrane. In terms of biological role, involved in the tethering and targeting of pkc-3 to modulate the intracellular distribution of the kinase. The complex formed with pkc-3 complexes are likely to be involved in assembly, maintenance, and/or regulation of protein complexes that execute asymmetric and/or polarized cell functions. This is Numb-related protein 1 from Caenorhabditis elegans.